We begin with the raw amino-acid sequence, 421 residues long: uncharacterized protein (421 aa).

This is an uncharacterized protein from Escherichia coli (strain K12).